The sequence spans 353 residues: S-adenosylmethionine:tRNA ribosyltransferase-isomerase (353 aa).

The protein belongs to the QueA family. In terms of assembly, monomer.

Its subcellular location is the cytoplasm. It carries out the reaction 7-aminomethyl-7-carbaguanosine(34) in tRNA + S-adenosyl-L-methionine = epoxyqueuosine(34) in tRNA + adenine + L-methionine + 2 H(+). It participates in tRNA modification; tRNA-queuosine biosynthesis. Its function is as follows. Transfers and isomerizes the ribose moiety from AdoMet to the 7-aminomethyl group of 7-deazaguanine (preQ1-tRNA) to give epoxyqueuosine (oQ-tRNA). This is S-adenosylmethionine:tRNA ribosyltransferase-isomerase from Baumannia cicadellinicola subsp. Homalodisca coagulata.